The sequence spans 342 residues: Spermidine synthase (342 aa).

Residues 9–42 (MKGTELPVKRPREEEAETEMEAANNSNNGCEKEE) form a disordered region. In terms of domain architecture, PABS spans 52–289 (PGWFSEISPL…GMIGFMLCST (238 aa)). Residue glutamine 83 participates in S-adenosyl 3-(methylsulfanyl)propylamine binding. Position 113 (tyrosine 113) interacts with putrescine. S-adenosyl 3-(methylsulfanyl)propylamine contacts are provided by residues glutamine 114, aspartate 138, glutamate 158, 189-190 (DG), and aspartate 208. Aspartate 208 (proton acceptor) is an active-site residue. Residues 208–211 (DSSD) and tyrosine 277 each bind putrescine.

Belongs to the spermidine/spermine synthase family.

The enzyme catalyses S-adenosyl 3-(methylsulfanyl)propylamine + putrescine = S-methyl-5'-thioadenosine + spermidine + H(+). It participates in amine and polyamine biosynthesis; spermidine biosynthesis; spermidine from putrescine: step 1/1. This chain is Spermidine synthase (SPDSYN), found in Solanum lycopersicum (Tomato).